The chain runs to 80 residues: Polcalcin Cyn d 7 (80 aa).

EF-hand domains follow at residues 2–37 (ADTGDMEHIFKRFDTNGDGKISLAELTDALRTLGST) and 40–72 (DEVQRMMAEIDTDGDGFIDFDEFISFCNANPGL). Asp-15, Asn-17, Asp-19, Lys-21, Glu-26, Asp-50, Asp-52, Asp-54, and Glu-61 together coordinate Ca(2+).

The chain is Polcalcin Cyn d 7 from Cynodon dactylon (Bermuda grass).